The sequence spans 412 residues: Peptidase T (412 aa).

Position 84 (H84) interacts with Zn(2+). The active site involves D86. Residue D146 coordinates Zn(2+). E179 serves as the catalytic Proton acceptor. Residues E180, D202, and H385 each contribute to the Zn(2+) site.

It belongs to the peptidase M20B family. The cofactor is Zn(2+).

The protein resides in the cytoplasm. It catalyses the reaction Release of the N-terminal residue from a tripeptide.. Its function is as follows. Cleaves the N-terminal amino acid of tripeptides. The sequence is that of Peptidase T from Pasteurella multocida (strain Pm70).